Consider the following 337-residue polypeptide: MLIKIPSRSDCSESEVTSETLYLSRRRLLGASFAGLALASGLPRLGFADEQRYAGVESVPAPGWFAEKLPQTRWQAVNVQGEAITPFKDATHYNNFYEFGPNKGDPAENASALKAEPWSVVIDGEVGKPGTYALEDFVKPYQLEERIYRLRCVEAWSMVIPWLGFPLADLLKRVEPNGQAKFVRFETLQRPEQMVGQRSGFSVIDWPYMEGLRMDEAMHPLAILAVGMYGRLLPNQNGAPLRLVVPWKYGFKSIKSIVRISLVREQPKTTWESIAANEYGFYANVNPQVDHPRWSQARERRLPSGLFSPNVRDTQMFNGYGSEVASLYSGMDLRKYY.

A signal peptide (tat-type signal) is located at residues 1-48 (MLIKIPSRSDCSESEVTSETLYLSRRRLLGASFAGLALASGLPRLGFA). Residues Asn94, 97-98 (YE), Cys152, Thr187, Asn237, Arg242, and 253-255 (SIK) each bind Mo-molybdopterin.

The protein belongs to the MsrP family. In terms of assembly, heterodimer of a catalytic subunit (MsrP) and a heme-binding subunit (MsrQ). Mo-molybdopterin serves as cofactor. In terms of processing, predicted to be exported by the Tat system. The position of the signal peptide cleavage has not been experimentally proven.

Its subcellular location is the periplasm. The catalysed reaction is L-methionyl-[protein] + a quinone + H2O = L-methionyl-(S)-S-oxide-[protein] + a quinol. It carries out the reaction L-methionyl-[protein] + a quinone + H2O = L-methionyl-(R)-S-oxide-[protein] + a quinol. Functionally, part of the MsrPQ system that repairs oxidized periplasmic proteins containing methionine sulfoxide residues (Met-O), using respiratory chain electrons. Thus protects these proteins from oxidative-stress damage caused by reactive species of oxygen and chlorine generated by the host defense mechanisms. MsrPQ is essential for the maintenance of envelope integrity under bleach stress, rescuing a wide series of structurally unrelated periplasmic proteins from methionine oxidation. The catalytic subunit MsrP is non-stereospecific, being able to reduce both (R-) and (S-) diastereoisomers of methionine sulfoxide. This is Protein-methionine-sulfoxide reductase catalytic subunit MsrP from Pseudomonas aeruginosa (strain ATCC 15692 / DSM 22644 / CIP 104116 / JCM 14847 / LMG 12228 / 1C / PRS 101 / PAO1).